Here is a 400-residue protein sequence, read N- to C-terminus: Elongation factor Tu 2 (400 aa).

The tr-type G domain occupies 10–209 (KPHVNIGTIG…KVDEYIPTPQ (200 aa)). A G1 region spans residues 19-26 (GHVDHGKT). 19–26 (GHVDHGKT) provides a ligand contact to GTP. Threonine 26 is a Mg(2+) binding site. Positions 60-64 (GITIN) are G2. Residues 81–84 (DCPG) are G3. GTP is bound by residues 81 to 85 (DCPGH) and 136 to 139 (NKAD). The segment at 136–139 (NKAD) is G4. The G5 stretch occupies residues 174-176 (SAL).

Belongs to the TRAFAC class translation factor GTPase superfamily. Classic translation factor GTPase family. EF-Tu/EF-1A subfamily. Monomer.

Its subcellular location is the cytoplasm. It catalyses the reaction GTP + H2O = GDP + phosphate + H(+). Functionally, GTP hydrolase that promotes the GTP-dependent binding of aminoacyl-tRNA to the A-site of ribosomes during protein biosynthesis. This Carboxydothermus hydrogenoformans (strain ATCC BAA-161 / DSM 6008 / Z-2901) protein is Elongation factor Tu 2.